The following is a 391-amino-acid chain: GTPase Obg (391 aa).

Residues 1–159 (MKFVDEAVVK…REIRLELLLL (159 aa)) form the Obg domain. Residues 160–333 (ADVGMLGLPN…LCYKLADFME (174 aa)) form the OBG-type G domain. Residues 166-173 (GLPNAGKS), 191-195 (FTTLI), 213-216 (DIPG), 283-286 (NKTD), and 314-316 (SAI) contribute to the GTP site. Residues serine 173 and threonine 193 each coordinate Mg(2+). Acidic residues predominate over residues 367-383 (TEEDDDDWDDCDDEDDD). Positions 367-391 (TEEDDDDWDDCDDEDDDGHVVYVRD) are disordered.

Belongs to the TRAFAC class OBG-HflX-like GTPase superfamily. OBG GTPase family. Monomer. Requires Mg(2+) as cofactor.

It is found in the cytoplasm. Its function is as follows. An essential GTPase which binds GTP, GDP and possibly (p)ppGpp with moderate affinity, with high nucleotide exchange rates and a fairly low GTP hydrolysis rate. Plays a role in control of the cell cycle, stress response, ribosome biogenesis and in those bacteria that undergo differentiation, in morphogenesis control. In Vibrio campbellii (strain ATCC BAA-1116), this protein is GTPase Obg.